Here is a 300-residue protein sequence, read N- to C-terminus: tRNA dimethylallyltransferase (300 aa).

11-18 (GPTAVGKS) provides a ligand contact to ATP. 13–18 (TAVGKS) is a binding site for substrate. Positions 35-38 (DSIQ) are interaction with substrate tRNA.

This sequence belongs to the IPP transferase family. Monomer. It depends on Mg(2+) as a cofactor.

It catalyses the reaction adenosine(37) in tRNA + dimethylallyl diphosphate = N(6)-dimethylallyladenosine(37) in tRNA + diphosphate. Its function is as follows. Catalyzes the transfer of a dimethylallyl group onto the adenine at position 37 in tRNAs that read codons beginning with uridine, leading to the formation of N6-(dimethylallyl)adenosine (i(6)A). This Borrelia recurrentis (strain A1) protein is tRNA dimethylallyltransferase.